Consider the following 357-residue polypeptide: UPF0283 membrane protein BOV_0999 (357 aa).

The segment at 1-36 (MSDKTPRKPTAFRLEQPARVSAASEQEEPRRPRAVK) is disordered. The segment covering 27–36 (EEPRRPRAVK) has biased composition (basic and acidic residues). The next 2 helical transmembrane spans lie at 78–98 (ILFG…TEDL) and 109–129 (LGWT…AIIL).

This sequence belongs to the UPF0283 family.

It localises to the cell inner membrane. This chain is UPF0283 membrane protein BOV_0999, found in Brucella ovis (strain ATCC 25840 / 63/290 / NCTC 10512).